The chain runs to 107 residues: Small ribosomal subunit protein uS17 (107 aa).

Belongs to the universal ribosomal protein uS17 family. In terms of assembly, part of the 30S ribosomal subunit.

Functionally, one of the primary rRNA binding proteins, it binds specifically to the 5'-end of 16S ribosomal RNA. This is Small ribosomal subunit protein uS17 from Thermotoga petrophila (strain ATCC BAA-488 / DSM 13995 / JCM 10881 / RKU-1).